The chain runs to 137 residues: ATP synthase epsilon chain (137 aa).

Belongs to the ATPase epsilon chain family. As to quaternary structure, F-type ATPases have 2 components, CF(1) - the catalytic core - and CF(0) - the membrane proton channel. CF(1) has five subunits: alpha(3), beta(3), gamma(1), delta(1), epsilon(1). CF(0) has three main subunits: a, b and c.

Its subcellular location is the cell membrane. In terms of biological role, produces ATP from ADP in the presence of a proton gradient across the membrane. This chain is ATP synthase epsilon chain, found in Thermobifida fusca (strain YX).